The following is a 94-amino-acid chain: Putative regulatory protein THA_332 (94 aa).

This sequence belongs to the RemA family.

The chain is Putative regulatory protein THA_332 from Thermosipho africanus (strain TCF52B).